The chain runs to 364 residues: Valine dehydrogenase (364 aa).

The active site involves Lys91. 191–197 serves as a coordination point for NAD(+); the sequence is GVGKVGH.

It belongs to the Glu/Leu/Phe/Val dehydrogenases family. Homodimer.

It is found in the cytoplasm. It catalyses the reaction L-valine + NAD(+) + H2O = 3-methyl-2-oxobutanoate + NH4(+) + NADH + H(+). It functions in the pathway amino-acid degradation; L-valine degradation. Its activity is regulated as follows. Repressed in minimal medium by the presence of glucose and NH4(+), glycerol and NH4(+), or glycerol and asparagine. In terms of biological role, oxidative deamination of branched-chain amino acids. Oxidizes L-valine and L-alpha-aminobutyric acid efficiently, and L-isoleucine and L-leucine less efficiently. Does not act on D-valine. The catabolism of L-valine is the major source of fatty acid precursors for macrolide biosynthesis and a vital source of antibiotic precursors. Uses NAD; no activity was found with NADP. This is Valine dehydrogenase (vdh) from Streptomyces coelicolor (strain ATCC BAA-471 / A3(2) / M145).